We begin with the raw amino-acid sequence, 468 residues long: Probable Xaa-Pro aminopeptidase PEPP (468 aa).

Residues Asp264, Asp275, Glu398, and Glu438 each contribute to the Mn(2+) site.

It belongs to the peptidase M24B family. The cofactor is Mn(2+).

The catalysed reaction is Release of any N-terminal amino acid, including proline, that is linked to proline, even from a dipeptide or tripeptide.. Functionally, catalyzes the removal of a penultimate prolyl residue from the N-termini of peptides. This is Probable Xaa-Pro aminopeptidase PEPP (PEPP) from Ajellomyces dermatitidis (strain ER-3 / ATCC MYA-2586) (Blastomyces dermatitidis).